A 223-amino-acid chain; its full sequence is Translation initiation factor 6 (223 aa).

Belongs to the eIF-6 family. In terms of assembly, associates with the 50S ribosomal subunit, specifically with protein L14. Binds to 23S rRNA, possibly between where the 30S and 50S subunits associate to initiate translation. Post-translationally, modified in an unknown fashion (not phosphorylation) following release from 50S ribosomal subunits.

Its function is as follows. Binds to the 50S ribosomal subunit and prevents its association with the 30S ribosomal subunit to form the 70S initiation complex. Inhibits translation of both leadered and leaderless mRNAs, maybe by binding to the 50S ribosome subunit, preventing it from binding to the 30S subunit. The protein is Translation initiation factor 6 of Saccharolobus solfataricus (strain ATCC 35092 / DSM 1617 / JCM 11322 / P2) (Sulfolobus solfataricus).